The chain runs to 638 residues: 1,4-alpha-glucan branching enzyme GlgB (638 aa).

The active-site Nucleophile is D320. Residue E373 is the Proton donor of the active site.

This sequence belongs to the glycosyl hydrolase 13 family. GlgB subfamily. As to quaternary structure, monomer.

The catalysed reaction is Transfers a segment of a (1-&gt;4)-alpha-D-glucan chain to a primary hydroxy group in a similar glucan chain.. Its pathway is glycan biosynthesis; glycogen biosynthesis. Its function is as follows. Catalyzes the formation of the alpha-1,6-glucosidic linkages in glycogen by scission of a 1,4-alpha-linked oligosaccharide from growing alpha-1,4-glucan chains and the subsequent attachment of the oligosaccharide to the alpha-1,6 position. The polypeptide is 1,4-alpha-glucan branching enzyme GlgB (Oleidesulfovibrio alaskensis (strain ATCC BAA-1058 / DSM 17464 / G20) (Desulfovibrio alaskensis)).